Consider the following 462-residue polypeptide: Glutamate decarboxylase alpha (462 aa).

N6-(pyridoxal phosphate)lysine is present on Lys273.

Belongs to the group II decarboxylase family. Requires pyridoxal 5'-phosphate as cofactor.

The enzyme catalyses L-glutamate + H(+) = 4-aminobutanoate + CO2. Converts internalized glutamate to GABA and increases the internal pH. Involved in glutamate-dependent acid resistance in gastric fluid. This chain is Glutamate decarboxylase alpha (gadA), found in Listeria monocytogenes serovar 1/2a (strain ATCC BAA-679 / EGD-e).